We begin with the raw amino-acid sequence, 64 residues long: Large ribosomal subunit protein bL35 (64 aa).

The tract at residues 1–25 (MPKLKTHSGAAKRFKKTATGKVKRS) is disordered.

Belongs to the bacterial ribosomal protein bL35 family.

This is Large ribosomal subunit protein bL35 from Koribacter versatilis (strain Ellin345).